Reading from the N-terminus, the 340-residue chain is UDP-3-O-acylglucosamine N-acyltransferase (340 aa).

The active-site Proton acceptor is the H247.

It belongs to the transferase hexapeptide repeat family. LpxD subfamily. Homotrimer.

It carries out the reaction a UDP-3-O-[(3R)-3-hydroxyacyl]-alpha-D-glucosamine + a (3R)-hydroxyacyl-[ACP] = a UDP-2-N,3-O-bis[(3R)-3-hydroxyacyl]-alpha-D-glucosamine + holo-[ACP] + H(+). It functions in the pathway bacterial outer membrane biogenesis; LPS lipid A biosynthesis. Functionally, catalyzes the N-acylation of UDP-3-O-acylglucosamine using 3-hydroxyacyl-ACP as the acyl donor. Is involved in the biosynthesis of lipid A, a phosphorylated glycolipid that anchors the lipopolysaccharide to the outer membrane of the cell. The chain is UDP-3-O-acylglucosamine N-acyltransferase from Caulobacter sp. (strain K31).